The sequence spans 151 residues: D-aminoacyl-tRNA deacylase (151 aa).

The short motif at 137–138 (GP) is the Gly-cisPro motif, important for rejection of L-amino acids element.

The protein belongs to the DTD family. As to quaternary structure, homodimer.

Its subcellular location is the cytoplasm. It catalyses the reaction glycyl-tRNA(Ala) + H2O = tRNA(Ala) + glycine + H(+). The catalysed reaction is a D-aminoacyl-tRNA + H2O = a tRNA + a D-alpha-amino acid + H(+). In terms of biological role, an aminoacyl-tRNA editing enzyme that deacylates mischarged D-aminoacyl-tRNAs. Also deacylates mischarged glycyl-tRNA(Ala), protecting cells against glycine mischarging by AlaRS. Acts via tRNA-based rather than protein-based catalysis; rejects L-amino acids rather than detecting D-amino acids in the active site. By recycling D-aminoacyl-tRNA to D-amino acids and free tRNA molecules, this enzyme counteracts the toxicity associated with the formation of D-aminoacyl-tRNA entities in vivo and helps enforce protein L-homochirality. The protein is D-aminoacyl-tRNA deacylase of Fusobacterium nucleatum subsp. nucleatum (strain ATCC 25586 / DSM 15643 / BCRC 10681 / CIP 101130 / JCM 8532 / KCTC 2640 / LMG 13131 / VPI 4355).